A 554-amino-acid polypeptide reads, in one-letter code: Hydroxylamine reductase (554 aa).

[2Fe-2S] cluster contacts are provided by cysteine 3, cysteine 6, cysteine 18, and cysteine 25. The hybrid [4Fe-2O-2S] cluster site is built by histidine 252, glutamate 276, cysteine 320, cysteine 408, cysteine 436, cysteine 461, glutamate 495, and lysine 497. At cysteine 408 the chain carries Cysteine persulfide.

It belongs to the HCP family. [2Fe-2S] cluster is required as a cofactor. Hybrid [4Fe-2O-2S] cluster serves as cofactor.

It is found in the cytoplasm. It catalyses the reaction A + NH4(+) + H2O = hydroxylamine + AH2 + H(+). Functionally, catalyzes the reduction of hydroxylamine to form NH(3) and H(2)O. The protein is Hydroxylamine reductase of Shewanella baltica (strain OS195).